A 1984-amino-acid chain; its full sequence is Spermatogenesis-associated protein 31H1 (1984 aa).

5 disordered regions span residues 448 to 467 (MGLT…TPGP), 1045 to 1067 (PMEE…QHSL), 1181 to 1287 (YRER…SDSK), 1326 to 1346 (RIGA…KPSQ), and 1439 to 1984 (QQPR…EATR). Composition is skewed to polar residues over residues 450–463 (LTKS…SPGT), 1058–1067 (TRISESQHSL), and 1205–1226 (TQAS…QSPA). Residues 1238–1247 (SRPDLVEKTK) show a composition bias toward basic and acidic residues. Polar residues-rich tracts occupy residues 1458 to 1471 (TDSQ…TASV) and 1492 to 1508 (RNET…TPGT). 2 stretches are compositionally biased toward basic and acidic residues: residues 1532–1558 (DKLT…ERTR) and 1568–1579 (SPSERSQRSSLE). 3 consecutive repeat copies span residues 1593 to 1600 (PSRKNHSS), 1601 to 1608 (PSERSWRS), and 1609 to 1616 (PSQRNHCS). Positions 1593–1935 (PSRKNHSSPS…CSPSERSRRS (343 aa)) are 27 X 8 AA approximate tandem repeat of P-S-E-R-S-H-H-S. Over residues 1599–1610 (SSPSERSWRSPS) the composition is skewed to low complexity. Basic and acidic residues predominate over residues 1620–1630 (RSCHSLSERGL). Residues 1636 to 1647 (RSHRGPSQRRHH) show a composition bias toward basic residues. A run of 3 repeats spans residues 1641–1648 (PSQRRHHS), 1649–1656 (PSERSHRS), and 1657–1664 (PSERSHRS). Positions 1648-1667 (SPSERSHRSPSERSHRSSSE) are enriched in basic and acidic residues. Residues 1668–1679 (RRHRSPSQRSHR) are compositionally biased toward basic residues. Basic and acidic residues predominate over residues 1680–1691 (GPSERSHCSPSE). Tandem repeats lie at residues 1681 to 1688 (PSERSHCS), 1689 to 1696 (PSERRHRS), 1697 to 1704 (PSQRSHRG), 1705 to 1712 (PSERRHHS), 1713 to 1720 (PSKRSHRS), 1721 to 1728 (PARRSHRS), 1729 to 1736 (PSERSHHS), 1737 to 1744 (PSERSHHS), 1745 to 1752 (PSERRHHS), 1753 to 1760 (PSERSHCS), 1761 to 1768 (PSERSHCS), 1769 to 1776 (PSERRHRS), 1777 to 1784 (PSERRHHS), 1785 to 1792 (PSEKSHHS), 1793 to 1800 (PSERSHHS), 1801 to 1808 (PSERRRHS), 1848 to 1855 (PSEKSHLS), 1864 to 1871 (PSERRGHS), and 1880 to 1887 (PSERSHRS). Residues 1692 to 1727 (RRHRSPSQRSHRGPSERRHHSPSKRSHRSPARRSHR) are compositionally biased toward basic residues. Positions 1728 to 1869 (SPSERSHHSP…SRCSPSERRG (142 aa)) are enriched in basic and acidic residues. Composition is skewed to basic and acidic residues over residues 1895 to 1917 (RTSE…EMRP), 1928 to 1941 (PSER…KEGL), and 1949 to 1959 (RPSHSLSRDFK). A run of 2 repeats spans residues 1921 to 1928 (SGRNHCSP) and 1929 to 1935 (SERSRRS). The segment covering 1960–1969 (NQTTLLGTTH) has biased composition (polar residues).

As to expression, expressed in sperm (at protein level).

This is Spermatogenesis-associated protein 31H1 from Homo sapiens (Human).